A 185-amino-acid chain; its full sequence is Crossover junction endodeoxyribonuclease RuvC (185 aa).

Residues aspartate 7, glutamate 66, and aspartate 137 contribute to the active site. 3 residues coordinate Mg(2+): aspartate 7, glutamate 66, and aspartate 137.

The protein belongs to the RuvC family. In terms of assembly, homodimer which binds Holliday junction (HJ) DNA. The HJ becomes 2-fold symmetrical on binding to RuvC with unstacked arms; it has a different conformation from HJ DNA in complex with RuvA. In the full resolvosome a probable DNA-RuvA(4)-RuvB(12)-RuvC(2) complex forms which resolves the HJ. It depends on Mg(2+) as a cofactor.

The protein resides in the cytoplasm. It carries out the reaction Endonucleolytic cleavage at a junction such as a reciprocal single-stranded crossover between two homologous DNA duplexes (Holliday junction).. Functionally, the RuvA-RuvB-RuvC complex processes Holliday junction (HJ) DNA during genetic recombination and DNA repair. Endonuclease that resolves HJ intermediates. Cleaves cruciform DNA by making single-stranded nicks across the HJ at symmetrical positions within the homologous arms, yielding a 5'-phosphate and a 3'-hydroxyl group; requires a central core of homology in the junction. The consensus cleavage sequence is 5'-(A/T)TT(C/G)-3'. Cleavage occurs on the 3'-side of the TT dinucleotide at the point of strand exchange. HJ branch migration catalyzed by RuvA-RuvB allows RuvC to scan DNA until it finds its consensus sequence, where it cleaves and resolves the cruciform DNA. The polypeptide is Crossover junction endodeoxyribonuclease RuvC (Anaeromyxobacter dehalogenans (strain 2CP-C)).